Consider the following 960-residue polypeptide: MAEADPGLPTQAIWDIPFESLEFNEKIGKGSFGSVFRGCYLGLDVAIKKIEKADDPEYLKYIDREVSMLQSLRHPFIVNFSGICVHSSGLYIVTEFVSGGDVRQLLKKTPPIGWDKRVSIAVDLAKAMVFLHAKKIIHRDLKSKNILLDEFQRIRLCDFGFARMSEQTKKSRHMTMCGTEGWVAPEILLGMSYDTSCDVFSYGVVLAELITGRKPGVDLWVRSPETCFDINPEELKQKSIPGCPSELISVCVECCLYEPLTRPKFDEILSQLKVCQNNLKVATAAAAAAAAAAAAAAAVVSTPTIQTPIIQTPNISFSPNNSNNNNNNNNNISNISPDITTGIQQINLSSSGGSNNSSPSTPPQGSQLVSLAQSRRNTMSLHRKSMELNLVDGQLSTTPPPTSPIQSRPHKPSDSIWKIAAKPKHVGYQTLKRKQGPCYAALTSHITKMIERATSDYYYDTSYIQDFLLAYRCFAPPQQIFELLLSRYIANSPDNFTNDINGWKKVQRVIQLRVIIFFKRWIDYYPQDFLEEAMEDNLNEFDKISAQQNSSTALLLGTTISNNELLIDPKLMTELQKKRSELELLIQINSPSDFINNNNNNNNNPVNNINNINNNNSVNSSSSNNNNNNNNNNSNNNNNNNNNNNNNNNNNNGLNIINIAAANQSKMMLQNGNNRYSVLVTSNGIGNGEEPYPVSIIPPPTTSEYLDVKDIHSTELARQITIINSFYFNRIKAREFIEYIWEKCGEESTTTPYVGTSFVEVVPAENIHKFVRKCNNLARFVSTEILKQTKLQKRVATIERFIEAAEKCLANNDYAAVFSIVEPLVDQSIERLSDTWRNVSQRNLATFEHLKSIVSKENDHKKYRELLPDAKPPCIPNIHLLLDELSFIETSSPRLLPGGIVNFFHYRQLSRKILQSQQLQSHCFRPIPSIQKVLTKPPSELFDDELIKNNSLKCEPPVSL.

In terms of domain architecture, Protein kinase spans 21 to 274; it reads LEFNEKIGKG…FDEILSQLKV (254 aa). Residues 27-35 and lysine 48 each bind ATP; that span reads IGKGSFGSV. The active-site Proton acceptor is the aspartate 140. Residues 314–368 show a composition bias toward low complexity; that stretch reads NISFSPNNSNNNNNNNNNISNISPDITTGIQQINLSSSGGSNNSSPSTPPQGSQL. Disordered regions lie at residues 314 to 372 and 393 to 413; these read NISF…VSLA and GQLS…HKPS. Residues 437–565 enclose the N-terminal Ras-GEF domain; it reads PCYAALTSHI…LGTTISNNEL (129 aa). The segment at 596-651 is disordered; the sequence is NNNNNNNNNPVNNINNINNNNSVNSSSSNNNNNNNNNNSNNNNNNNNNNNNNNNNN. One can recognise a Ras-GEF domain in the interval 712-957; sequence HSTELARQIT…KNNSLKCEPP (246 aa).

It belongs to the protein kinase superfamily. TKL Ser/Thr protein kinase family.

The enzyme catalyses L-seryl-[protein] + ATP = O-phospho-L-seryl-[protein] + ADP + H(+). The catalysed reaction is L-threonyl-[protein] + ATP = O-phospho-L-threonyl-[protein] + ADP + H(+). In terms of biological role, promotes the exchange of Ras-bound GDP by GTP. In Dictyostelium discoideum (Social amoeba), this protein is RasGEF domain-containing serine/threonine-protein kinase X (gefX).